A 23-amino-acid chain; its full sequence is Basic phospholipase A2 homolog (23 aa).

In terms of processing, contains 7 disulfide bonds. As to expression, expressed by the venom gland.

The protein resides in the secreted. The sequence is that of Basic phospholipase A2 homolog from Trimeresurus stejnegeri (Chinese green tree viper).